Consider the following 428-residue polypeptide: AP-1 complex subunit mu (428 aa).

N-acetylalanine; partial is present on Ala-2. Residues 169 to 426 (KNEVFLDVVE…VCLSGDYQFR (258 aa)) enclose the MHD domain.

The protein belongs to the adaptor complexes medium subunit family. In terms of assembly, adaptor protein complex 1 (AP-1) is a heterotetramer composed of two large adaptins (gamma-type subunit and beta-type subunit), a medium adaptin (mu-type subunit) and a small adaptin (sigma-type subunit).

The protein resides in the golgi apparatus. It is found in the trans-Golgi network. The protein localises to the cytoplasmic vesicle. Its subcellular location is the clathrin-coated vesicle membrane. Functionally, subunit of clathrin-associated adaptor protein complex 1 that plays a role in protein sorting in the trans-Golgi network (TGN) and endosomes. The AP complexes mediate the recruitment of clathrin to membranes and the recognition of sorting signals within the cytosolic tails of transmembrane cargo molecules. Also involved in early steps of phagocytosis and macropinocytosis. The protein is AP-1 complex subunit mu (apm1) of Dictyostelium discoideum (Social amoeba).